Reading from the N-terminus, the 617-residue chain is Pentatricopeptide repeat-containing protein At4g18520, chloroplastic (617 aa).

The transit peptide at 1 to 19 (MFSLSLIQPRLRISEIPVT) directs the protein to the chloroplast. PPR repeat units follow at residues 116 to 146 (VIYF…MPEK), 147 to 181 (NTVT…GIRF), 183 to 217 (NERM…GVGN), 222 to 247 (SSLV…MEEK), 248 to 282 (DVIS…WFLP), 283 to 317 (NEFT…MIKT), 318 to 348 (DVFV…MSNR), 349 to 383 (NTVT…HLIA), 384 to 418 (NNLT…SIEK), 419 to 449 (NVYI…LPSR), 450 to 484 (DVVS…GVEP), 485 to 519 (NPFT…HALS), 520 to 550 (NVFV…MPEK), and 551 to 585 (NLVS…GFEV).

The protein belongs to the PPR family. PCMP-A subfamily. Interacts with MORF8/RIP1, MORF2/RIP2 and MORF9/RIP9. In terms of tissue distribution, expressed specifically in aerial greening tissues, such as cotyledons, rosette leaves, cauline leaves, stems, sepals, stamens, carpels and siliques.

The protein resides in the plastid. Its subcellular location is the chloroplast. Required for proper chloroplast development. Involved in the regulation of plastid gene expression probably through regulation of plastid-encoded polymerase (PEP) dependent chloroplast transcription. Required for RNA editing of several chloroplastic transcripts, especially accD transcripts. Required for processing of the chloroplastic rpoA pre-mRNA. Required for the monocistronic rpoA transcript processing from the rpl23-rpl2-rps19-rpl22-rps3-rpl16-rpl14-rps8-rpl36-rps11-rpoA polycistron. Binds the intergenic sequence of rps11-rpoA for rpoA monocistronic RNA cleavage. This is Pentatricopeptide repeat-containing protein At4g18520, chloroplastic (PCMP-A2) from Arabidopsis thaliana (Mouse-ear cress).